A 549-amino-acid chain; its full sequence is GATA-type transcription factor sreA (549 aa).

Positions 40–100 (AQAGREHPQD…TSPKSQKDTS (61 aa)) are disordered. Composition is skewed to basic and acidic residues over residues 43-72 (GREHPQDRHYTDNGSRKSEAGAPHSHHEGE) and 86-97 (HHVEKTSPKSQK). The segment at 106-130 (CSNCGTKSTPLWRRSPTGAMICNAC) adopts a GATA-type 1 zinc-finger fold. The interval 141–174 (RPTKRNRTQASPEAYHPQNQSVGSQPDPAVTGSE) is disordered. The interval 180-198 (CPGGGNCNGTGGAEGCDGC) is cystein-rich region (CRR). The disordered stretch occupies residues 223–244 (GNSDAVPSPEAEAPARNSGQPE). Residues 251–275 (CQNCGTTVTPLWRRDENGHPICNAC) form a GATA-type 2 zinc finger. Disordered regions lie at residues 306–332 (RENSPTAATHSSHGSSASPEASSPATL), 375–459 (NSGA…RLSS), and 482–535 (LGRQ…MREQ). Positions 309–331 (SPTAATHSSHGSSASPEASSPAT) are enriched in low complexity. Pro residues predominate over residues 383–396 (HHPPPPRLLEPGHP). Low complexity predominate over residues 485-497 (QQQSQPHHPQSSP). Residues 498-515 (LAPTQAASQSLPGVSNMD) are compositionally biased toward polar residues. The stretch at 511 to 549 (VSNMDNHVEDRRAKLQREAEEMREQLRAKERELAELAGQ) forms a coiled coil. Residues 516–535 (NHVEDRRAKLQREAEEMREQ) show a composition bias toward basic and acidic residues.

It is found in the nucleus. Functionally, GATA-type transcription repressor that regulates iron- acquisition genes through specific binding GATA sequence elements of target promoters. Iron acquisition regulation is critical for survival under both iron-limiting conditions (to acquire essential iron) and iron-replete conditions (to limit iron toxicity). SreA targets include genes encoding a number of key iron-regulated factors such as those involved in siderophore biosynthesis. This chain is GATA-type transcription factor sreA, found in Emericella nidulans (strain FGSC A4 / ATCC 38163 / CBS 112.46 / NRRL 194 / M139) (Aspergillus nidulans).